The chain runs to 601 residues: ATP-dependent RNA helicase DeaD (601 aa).

The Q motif motif lies at 6-34; it reads STFSFLGLNPFIIQSLNEMGYVKPSPIQA. Positions 37–208 constitute a Helicase ATP-binding domain; sequence IPLLLEGRDV…KRFMRNPKEI (172 aa). 50–57 is an ATP binding site; it reads AQTGSGKT. The short motif at 156–159 is the DEAD box element; the sequence is DEAD. Residues 231 to 378 form the Helicase C-terminal domain; sequence KTDALIRFLE…EVQLPKVELL (148 aa). The segment covering 552 to 576 has biased composition (basic and acidic residues); that stretch reads SRHYENKTTHRSIFNKDKNSNRRVS. The interval 552 to 601 is disordered; the sequence is SRHYENKTTHRSIFNKDKNSNRRVSDGSFNKSNSPKKTEFKSSFFRRRNV.

This sequence belongs to the DEAD box helicase family. DeaD/CsdA subfamily.

Its subcellular location is the cytoplasm. The enzyme catalyses ATP + H2O = ADP + phosphate + H(+). Its function is as follows. DEAD-box RNA helicase involved in various cellular processes at low temperature, including ribosome biogenesis, mRNA degradation and translation initiation. The protein is ATP-dependent RNA helicase DeaD of Buchnera aphidicola subsp. Acyrthosiphon pisum (strain APS) (Acyrthosiphon pisum symbiotic bacterium).